The following is a 259-amino-acid chain: Thiazole synthase (259 aa).

Lys-99 (schiff-base intermediate with DXP) is an active-site residue. 1-deoxy-D-xylulose 5-phosphate is bound by residues Gly-161, 187–188 (AG), and 209–210 (NT).

The protein belongs to the ThiG family. Homotetramer. Forms heterodimers with either ThiH or ThiS.

The protein localises to the cytoplasm. It carries out the reaction [ThiS sulfur-carrier protein]-C-terminal-Gly-aminoethanethioate + 2-iminoacetate + 1-deoxy-D-xylulose 5-phosphate = [ThiS sulfur-carrier protein]-C-terminal Gly-Gly + 2-[(2R,5Z)-2-carboxy-4-methylthiazol-5(2H)-ylidene]ethyl phosphate + 2 H2O + H(+). Its pathway is cofactor biosynthesis; thiamine diphosphate biosynthesis. Functionally, catalyzes the rearrangement of 1-deoxy-D-xylulose 5-phosphate (DXP) to produce the thiazole phosphate moiety of thiamine. Sulfur is provided by the thiocarboxylate moiety of the carrier protein ThiS. In vitro, sulfur can be provided by H(2)S. The protein is Thiazole synthase of Nautilia profundicola (strain ATCC BAA-1463 / DSM 18972 / AmH).